The primary structure comprises 337 residues: Ketol-acid reductoisomerase (NADP(+)) (337 aa).

A KARI N-terminal Rossmann domain is found at 3–183 (IELFYDADAD…GGGRAGIIPT (181 aa)). NADP(+) is bound by residues 26-29 (YGSQ), R49, S52, S54, and 84-87 (DTSQ). Residue H109 is part of the active site. NADP(+) is bound at residue G135. The region spanning 184 to 329 (TFEAETVTDL…AKLRDLMSWV (146 aa)) is the KARI C-terminal knotted domain. Residues D192, E196, E228, and E232 each contribute to the Mg(2+) site. S253 contributes to the substrate binding site.

The protein belongs to the ketol-acid reductoisomerase family. Mg(2+) serves as cofactor.

The enzyme catalyses (2R)-2,3-dihydroxy-3-methylbutanoate + NADP(+) = (2S)-2-acetolactate + NADPH + H(+). It catalyses the reaction (2R,3R)-2,3-dihydroxy-3-methylpentanoate + NADP(+) = (S)-2-ethyl-2-hydroxy-3-oxobutanoate + NADPH + H(+). It participates in amino-acid biosynthesis; L-isoleucine biosynthesis; L-isoleucine from 2-oxobutanoate: step 2/4. Its pathway is amino-acid biosynthesis; L-valine biosynthesis; L-valine from pyruvate: step 2/4. In terms of biological role, involved in the biosynthesis of branched-chain amino acids (BCAA). Catalyzes an alkyl-migration followed by a ketol-acid reduction of (S)-2-acetolactate (S2AL) to yield (R)-2,3-dihydroxy-isovalerate. In the isomerase reaction, S2AL is rearranged via a Mg-dependent methyl migration to produce 3-hydroxy-3-methyl-2-ketobutyrate (HMKB). In the reductase reaction, this 2-ketoacid undergoes a metal-dependent reduction by NADPH to yield (R)-2,3-dihydroxy-isovalerate. The chain is Ketol-acid reductoisomerase (NADP(+)) from Corynebacterium efficiens (strain DSM 44549 / YS-314 / AJ 12310 / JCM 11189 / NBRC 100395).